A 122-amino-acid chain; its full sequence is Large ribosomal subunit protein uL14 (122 aa).

The protein belongs to the universal ribosomal protein uL14 family. In terms of assembly, part of the 50S ribosomal subunit. Forms a cluster with proteins L3 and L19. In the 70S ribosome, L14 and L19 interact and together make contacts with the 16S rRNA in bridges B5 and B8.

Functionally, binds to 23S rRNA. Forms part of two intersubunit bridges in the 70S ribosome. In Chlorobaculum tepidum (strain ATCC 49652 / DSM 12025 / NBRC 103806 / TLS) (Chlorobium tepidum), this protein is Large ribosomal subunit protein uL14.